The sequence spans 115 residues: DNA-binding protein Ta0052 (115 aa).

The interval 1-41 (MDDDEELERIRRQQLESMQRQAMQEQMREEQEKQREAERAR) is disordered. Over residues 15 to 25 (LESMQRQAMQE) the composition is skewed to low complexity. The segment covering 26-41 (QMREEQEKQREAERAR) has biased composition (basic and acidic residues).

It belongs to the PDCD5 family.

In Thermoplasma acidophilum (strain ATCC 25905 / DSM 1728 / JCM 9062 / NBRC 15155 / AMRC-C165), this protein is DNA-binding protein Ta0052.